A 339-amino-acid chain; its full sequence is Methionyl-tRNA formyltransferase (339 aa).

110–113 contacts (6S)-5,6,7,8-tetrahydrofolate; sequence SLLP.

It belongs to the Fmt family.

The enzyme catalyses L-methionyl-tRNA(fMet) + (6R)-10-formyltetrahydrofolate = N-formyl-L-methionyl-tRNA(fMet) + (6S)-5,6,7,8-tetrahydrofolate + H(+). Functionally, attaches a formyl group to the free amino group of methionyl-tRNA(fMet). The formyl group appears to play a dual role in the initiator identity of N-formylmethionyl-tRNA by promoting its recognition by IF2 and preventing the misappropriation of this tRNA by the elongation apparatus. The protein is Methionyl-tRNA formyltransferase of Prochlorococcus marinus (strain MIT 9211).